A 156-amino-acid chain; its full sequence is ATP synthase subunit b (156 aa).

The chain crosses the membrane as a helical span at residues 13-33; it reads AFIIFVWFCMKFVWPPLMNAI.

This sequence belongs to the ATPase B chain family. F-type ATPases have 2 components, F(1) - the catalytic core - and F(0) - the membrane proton channel. F(1) has five subunits: alpha(3), beta(3), gamma(1), delta(1), epsilon(1). F(0) has three main subunits: a(1), b(2) and c(10-14). The alpha and beta chains form an alternating ring which encloses part of the gamma chain. F(1) is attached to F(0) by a central stalk formed by the gamma and epsilon chains, while a peripheral stalk is formed by the delta and b chains.

Its subcellular location is the cell inner membrane. Functionally, f(1)F(0) ATP synthase produces ATP from ADP in the presence of a proton or sodium gradient. F-type ATPases consist of two structural domains, F(1) containing the extramembraneous catalytic core and F(0) containing the membrane proton channel, linked together by a central stalk and a peripheral stalk. During catalysis, ATP synthesis in the catalytic domain of F(1) is coupled via a rotary mechanism of the central stalk subunits to proton translocation. Component of the F(0) channel, it forms part of the peripheral stalk, linking F(1) to F(0). This chain is ATP synthase subunit b, found in Shewanella woodyi (strain ATCC 51908 / MS32).